A 148-amino-acid chain; its full sequence is Arginine repressor (148 aa).

Belongs to the ArgR family.

It is found in the cytoplasm. It functions in the pathway amino-acid biosynthesis; L-arginine biosynthesis [regulation]. In terms of biological role, regulates arginine biosynthesis genes. The sequence is that of Arginine repressor from Chlorobium chlorochromatii (strain CaD3).